The primary structure comprises 455 residues: Ribosomal protein uS12 methylthiotransferase RimO (455 aa).

In terms of domain architecture, MTTase N-terminal spans 10–120 (PKVGMVSLGC…VVEAVHDAAP (111 aa)). [4Fe-4S] cluster is bound by residues Cys19, Cys55, Cys84, Cys151, Cys155, and Cys158. The Radical SAM core domain occupies 137–380 (LTPRHYSYLK…MAKTAAISAA (244 aa)). The 73-residue stretch at 383-455 (EAKIGRTLPV…DEHDLFGVVT (73 aa)) folds into the TRAM domain.

The protein belongs to the methylthiotransferase family. RimO subfamily. [4Fe-4S] cluster serves as cofactor.

It localises to the cytoplasm. It catalyses the reaction L-aspartate(89)-[ribosomal protein uS12]-hydrogen + (sulfur carrier)-SH + AH2 + 2 S-adenosyl-L-methionine = 3-methylsulfanyl-L-aspartate(89)-[ribosomal protein uS12]-hydrogen + (sulfur carrier)-H + 5'-deoxyadenosine + L-methionine + A + S-adenosyl-L-homocysteine + 2 H(+). Functionally, catalyzes the methylthiolation of an aspartic acid residue of ribosomal protein uS12. This is Ribosomal protein uS12 methylthiotransferase RimO from Sphingopyxis alaskensis (strain DSM 13593 / LMG 18877 / RB2256) (Sphingomonas alaskensis).